The sequence spans 241 residues: Small ribosomal subunit protein uS2 (241 aa).

This sequence belongs to the universal ribosomal protein uS2 family.

This Cronobacter sakazakii (strain ATCC BAA-894) (Enterobacter sakazakii) protein is Small ribosomal subunit protein uS2.